Consider the following 75-residue polypeptide: Endogenous retrovirus group K member 24 Np9 protein (75 aa).

Residues 22–43 are disordered; sequence TAPKRQRPSRTGHDDDGGFVEK. A compositionally biased stretch (basic and acidic residues) spans 32 to 43; sequence TGHDDDGGFVEK.

Transcript detectable in many tumor cell lines and tumor tissues.

It is found in the nucleus. May possess a function in tumorigenesis. In Homo sapiens (Human), this protein is Endogenous retrovirus group K member 24 Np9 protein (ERVK-24).